The primary structure comprises 360 residues: Peptide chain release factor 1 (360 aa).

Q235 carries the N5-methylglutamine modification. Residues 283–293 (EREAQAKEASA) are compositionally biased toward basic and acidic residues. Residues 283–305 (EREAQAKEASARKSLIGSGDRSD) are disordered.

This sequence belongs to the prokaryotic/mitochondrial release factor family. Methylated by PrmC. Methylation increases the termination efficiency of RF1.

The protein resides in the cytoplasm. In terms of biological role, peptide chain release factor 1 directs the termination of translation in response to the peptide chain termination codons UAG and UAA. The polypeptide is Peptide chain release factor 1 (Ralstonia pickettii (strain 12J)).